Here is a 167-residue protein sequence, read N- to C-terminus: Probable glutathione peroxidase 8 (167 aa).

The active site involves Cys41.

The protein belongs to the glutathione peroxidase family.

It carries out the reaction 2 glutathione + H2O2 = glutathione disulfide + 2 H2O. Its function is as follows. May constitute a glutathione peroxidase-like protective system against oxidative stresses. This Arabidopsis thaliana (Mouse-ear cress) protein is Probable glutathione peroxidase 8 (GPX8).